Reading from the N-terminus, the 397-residue chain is Acetate kinase (397 aa).

Asparagine 7 provides a ligand contact to Mg(2+). ATP is bound at residue lysine 14. Residue arginine 90 participates in substrate binding. The Proton donor/acceptor role is filled by aspartate 147. Residues histidine 207 to glycine 211, aspartate 282 to arginine 284, and glycine 330 to asparagine 334 each bind ATP. Glutamate 383 is a Mg(2+) binding site.

This sequence belongs to the acetokinase family. Homodimer. Mg(2+) serves as cofactor. Requires Mn(2+) as cofactor.

It is found in the cytoplasm. The catalysed reaction is acetate + ATP = acetyl phosphate + ADP. Its pathway is metabolic intermediate biosynthesis; acetyl-CoA biosynthesis; acetyl-CoA from acetate: step 1/2. Functionally, catalyzes the formation of acetyl phosphate from acetate and ATP. Can also catalyze the reverse reaction. The chain is Acetate kinase from Clostridium botulinum (strain Loch Maree / Type A3).